The primary structure comprises 397 residues: Histidinol-phosphate aminotransferase (397 aa).

Lysine 247 bears the N6-(pyridoxal phosphate)lysine mark.

Belongs to the class-II pyridoxal-phosphate-dependent aminotransferase family. Histidinol-phosphate aminotransferase subfamily. In terms of assembly, homodimer. Pyridoxal 5'-phosphate serves as cofactor.

It catalyses the reaction L-histidinol phosphate + 2-oxoglutarate = 3-(imidazol-4-yl)-2-oxopropyl phosphate + L-glutamate. The protein operates within amino-acid biosynthesis; L-histidine biosynthesis; L-histidine from 5-phospho-alpha-D-ribose 1-diphosphate: step 7/9. The polypeptide is Histidinol-phosphate aminotransferase (Frankia casuarinae (strain DSM 45818 / CECT 9043 / HFP020203 / CcI3)).